Consider the following 101-residue polypeptide: Small ribosomal subunit protein uS14 (101 aa).

The tract at residues 32–62 (GDAKRSDAEREAARLGLQKLPRNANPTRQRN) is disordered. Over residues 33–44 (DAKRSDAEREAA) the composition is skewed to basic and acidic residues.

This sequence belongs to the universal ribosomal protein uS14 family. In terms of assembly, part of the 30S ribosomal subunit. Contacts proteins S3 and S10.

Its function is as follows. Binds 16S rRNA, required for the assembly of 30S particles and may also be responsible for determining the conformation of the 16S rRNA at the A site. This chain is Small ribosomal subunit protein uS14, found in Verminephrobacter eiseniae (strain EF01-2).